Here is a 749-residue protein sequence, read N- to C-terminus: Cytosolic phospholipase A2 (749 aa).

Positions 1 to 178 are phospholipid binding; sequence MSFIDPYQHI…MKKLLGPKNS (178 aa). Ser-2 is subject to Phosphoserine. A C2 domain is found at 6 to 122; that stretch reads PYQHIIVEHQ…KVGEKKEVPF (117 aa). Ca(2+) is bound by residues Asp-40, Thr-41, Asp-43, Asn-65, Asp-93, Ala-94, and Asn-95. Positions 140–740 constitute a PLA2c domain; that stretch reads SCPDLRFSMA…SNVEARRFFN (601 aa). Residue Ser-228 is the Nucleophile of the active site. Thr-268 is subject to Phosphothreonine. Residues 409–457 form a disordered region; the sequence is GSQSRGSTMEEELENITTKHIVSNDSSDSDDESHEPKGTENEDAGSDYQ. 3 positions are modified to phosphoserine: Ser-434, Ser-435, and Ser-437. A Phosphoserine; by MAPK modification is found at Ser-505. Ser-515 is modified (phosphoserine). Residue Lys-541 forms a Glycyl lysine isopeptide (Lys-Gly) (interchain with G-Cter in SUMO2) linkage. Asp-549 serves as the catalytic Proton acceptor. Lys-606 participates in a covalent cross-link: Glycyl lysine isopeptide (Lys-Gly) (interchain with G-Cter in SUMO2). Phosphoserine is present on residues Ser-727 and Ser-729.

Interacts with KAT5. In terms of processing, phosphorylated at both Ser-505 and Ser-727 in response to mitogenic stimuli. Expressed in various cells and tissues such as macrophages, neutrophils, fibroblasts and lung endothelium. Expressed in platelets (at protein level).

It is found in the cytoplasm. It localises to the golgi apparatus membrane. The protein resides in the nucleus envelope. It carries out the reaction a 1,2-diacyl-sn-glycero-3-phosphocholine + H2O = a 1-acyl-sn-glycero-3-phosphocholine + a fatty acid + H(+). The enzyme catalyses a 1-O-alkyl-2-acyl-sn-glycero-3-phosphocholine + H2O = a 1-O-alkyl-sn-glycero-3-phosphocholine + a fatty acid + H(+). It catalyses the reaction a 1-acyl-sn-glycero-3-phosphocholine + H2O = sn-glycerol 3-phosphocholine + a fatty acid + H(+). The catalysed reaction is 1-hexadecanoyl-2-(5Z,8Z,11Z,14Z-eicosatetraenoyl)-sn-glycero-3-phosphocholine + H2O = 1-hexadecanoyl-sn-glycero-3-phosphocholine + (5Z,8Z,11Z,14Z)-eicosatetraenoate + H(+). It carries out the reaction 1,2-di-(5Z,8Z,11Z,14Z-eicosatetraenoyl)-sn-glycero-3-phosphocholine + H2O = 1-(5Z,8Z,11Z,14Z-eicosatetraenoyl)-sn-glycero-3-phosphocholine + (5Z,8Z,11Z,14Z)-eicosatetraenoate + H(+). The enzyme catalyses 1-octadecanoyl-2-(5Z,8Z,11Z,14Z-eicosatetraenoyl)-sn-glycero-3-phosphocholine + H2O = 1-octadecanoyl-sn-glycero-3-phosphocholine + (5Z,8Z,11Z,14Z)-eicosatetraenoate + H(+). It catalyses the reaction 1-hexadecanoyl-2-(9Z,12Z-octadecadienoyl)-sn-glycero-3-phosphocholine + H2O = (9Z,12Z)-octadecadienoate + 1-hexadecanoyl-sn-glycero-3-phosphocholine + H(+). The catalysed reaction is 1-octadecanoyl-2-(9Z,12Z,15Z-octadecatrienoyl)-sn-glycero-3-phosphocholine + H2O = (9Z,12Z,15Z)-octadecatrienoate + 1-octadecanoyl-sn-glycero-3-phosphocholine + H(+). It carries out the reaction 1-(5Z,8Z,11Z,14Z-eicosatetraenoyl)-2-hexadecanoyl-sn-glycero-3-phosphocholine + H2O = 1-(5Z,8Z,11Z,14Z-eicosatetraenoyl)-sn-glycero-3-phosphocholine + hexadecanoate + H(+). The enzyme catalyses 1-O-hexadecyl-2-(5Z,8Z,11Z,14Z)-eicosatetraenoyl-sn-glycero-3-phosphocholine + H2O = 1-O-hexadecyl-sn-glycero-3-phosphocholine + (5Z,8Z,11Z,14Z)-eicosatetraenoate + H(+). It catalyses the reaction 1,2-di-(9Z-octadecenoyl)-sn-glycero-3-phospho-(1'-sn-glycerol) + H2O = 1-(9Z-octadecenoyl)-sn-glycero-3-phospho-(1'-sn-glycerol) + (9Z)-octadecenoate + H(+). The catalysed reaction is 1-octadecanoyl-2-(5Z,8Z,11Z,14Z-eicosatetraenoyl)-sn-glycero-3-phosphate + H2O = 1-octadecanoyl-sn-glycero-3-phosphate + (5Z,8Z,11Z,14Z)-eicosatetraenoate + H(+). It carries out the reaction 1-hexadecanoyl-sn-glycero-3-phosphocholine + H2O = sn-glycerol 3-phosphocholine + hexadecanoate + H(+). The enzyme catalyses 2-(prostaglandin E2)-sn-glycero-3-phosphoethanolamine + H2O = sn-glycero-3-phosphoethanolamine + prostaglandin E2 + H(+). It catalyses the reaction 2-[(15S)-hydroxy-(5Z,8Z,11Z,13E)-eicosatetraenoyl]-sn-glycero-3-phosphocholine + H2O = (15S)-hydroxy-(5Z,8Z,11Z,13E)-eicosatetraenoate + sn-glycerol 3-phosphocholine + H(+). The catalysed reaction is 2-[(15R)-hydroxy-(5Z,8Z,11Z,13E)-eicosatetraenoyl]-sn-glycero-3-phosphocholine + H2O = (15R)-hydroxy-(5Z,8Z,11Z,13E)-eicosatetraenoate + sn-glycerol 3-phosphocholine + H(+). It carries out the reaction 2-(prostaglandin E2)-sn-glycero-3-phosphocholine + H2O = prostaglandin E2 + sn-glycerol 3-phosphocholine + H(+). The enzyme catalyses 2-[(11R)-hydroxy-(5Z,8Z,12E,14Z)-eicosatetraenoyl]-sn-glycero-3-phosphocholine + H2O = (11R)-hydroxy-(5Z,8Z,12E,14Z)-eicosatetraenoate + sn-glycerol 3-phosphocholine + H(+). It catalyses the reaction 1-(5Z,8Z,11Z,14Z-eicosatetraenoyl)-2-O-hexadecyl-sn-glycero-3-phosphocholine + H2O = 2-O-hexadecyl-sn-glycero-3-phosphocholine + (5Z,8Z,11Z,14Z)-eicosatetraenoate + H(+). The catalysed reaction is 1-octadecanoyl-2-(5Z,8Z,11Z,14Z-eicosatetraenoyl)-sn-glycero-3-phosphocholine + glycerol = 1-(5Z,8Z,11Z,14Z-eicosatetraenoyl)-glycerol + 1-octadecanoyl-sn-glycero-3-phosphocholine. It carries out the reaction 1-octadecanoyl-2-(9Z,12Z,15Z-octadecatrienoyl)-sn-glycero-3-phosphocholine + glycerol = 1-(9Z,12Z,15Z-octadecatrienoyl)-glycerol + 1-octadecanoyl-sn-glycero-3-phosphocholine. The protein operates within membrane lipid metabolism; glycerophospholipid metabolism. It participates in lipid metabolism; arachidonate metabolism. It functions in the pathway lipid metabolism; prostaglandin biosynthesis. Its pathway is lipid metabolism; leukotriene B4 biosynthesis. Activated by cytosolic calcium, which is necessary for binding to membrane lipids. Activated by phosphorylation in response to mitogenic stimuli. Activated by ceramide-1-phosphate. Binding (via C2 domain) to ceramide-1-phosphate increases the affinity for membrane lipids. Can be activated by phosphoinositides in the absence of calcium. Inhibited by ANXA5 in a calcium- and substrate-dependent way. Has primarily calcium-dependent phospholipase and lysophospholipase activities, with a major role in membrane lipid remodeling and biosynthesis of lipid mediators of the inflammatory response. Plays an important role in embryo implantation and parturition through its ability to trigger prostanoid production. Preferentially hydrolyzes the ester bond of the fatty acyl group attached at sn-2 position of phospholipids (phospholipase A2 activity). Selectively hydrolyzes sn-2 arachidonoyl group from membrane phospholipids, providing the precursor for eicosanoid biosynthesis via the cyclooxygenase pathway. In an alternative pathway of eicosanoid biosynthesis, hydrolyzes sn-2 fatty acyl chain of eicosanoid lysophopholipids to release free bioactive eicosanoids. Hydrolyzes the ester bond of the fatty acyl group attached at sn-1 position of phospholipids (phospholipase A1 activity) only if an ether linkage rather than an ester linkage is present at the sn-2 position. This hydrolysis is not stereospecific. Has calcium-independent phospholipase A2 and lysophospholipase activities in the presence of phosphoinositides. Has O-acyltransferase activity. Catalyzes the transfer of fatty acyl chains from phospholipids to a primary hydroxyl group of glycerol (sn-1 or sn-3), potentially contributing to monoacylglycerol synthesis. This is Cytosolic phospholipase A2 (PLA2G4A) from Homo sapiens (Human).